Here is a 120-residue protein sequence, read N- to C-terminus: Small ribosomal subunit protein bS6 (120 aa).

The protein belongs to the bacterial ribosomal protein bS6 family.

In terms of biological role, binds together with bS18 to 16S ribosomal RNA. This chain is Small ribosomal subunit protein bS6, found in Blochmanniella floridana.